An 805-amino-acid polypeptide reads, in one-letter code: Transforming acidic coiled-coil-containing protein 1 (805 aa).

Ala2 carries the post-translational modification N-acetylalanine. Ala2 carries N-myristoyl glycine lipidation. An interaction with LSM7 and SNRPG region spans residues Ala2–Ser55. 3 positions are modified to phosphoserine: Ser4, Ser10, and Ser44. The interval Arg23–Glu140 is disordered. Over residues Gly28–Gln45 the composition is skewed to acidic residues. Composition is skewed to polar residues over residues Glu47–Asn60 and Ser111–Asp128. Over residues His130 to Glu140 the composition is skewed to basic and acidic residues. Phosphoserine occurs at positions 147 and 153. The tract at residues Phe152–Leu259 is interaction with TDRD7. The interaction with YEATS4 stretch occupies residues Glu206 to Asp427. SPAZ domains are found at residues Ala215–Thr297 and Ser359–Glu507. Residues Ala215–Lys457 are disordered. The Bipartite nuclear localization signal 1 signature appears at Arg226–Lys241. Positions Arg226–Ala242 are enriched in basic residues. Ser228 carries the phosphoserine; by AURKC modification. Phosphoserine occurs at positions 248 and 276. Composition is skewed to polar residues over residues Gly296–Ser305, Leu377–Gly413, and Pro431–His447. Phosphoserine occurs at positions 381 and 406. Residues Pro455–Lys471 carry the Bipartite nuclear localization signal 2 motif. The residue at position 483 (Ser483) is a Phosphoserine. Residues Ile493–Glu526 form a disordered region. Over residues Ser497–Leu509 the composition is skewed to basic and acidic residues. Tyr533 is subject to Phosphotyrosine. The residue at position 591 (Ser591) is a Phosphoserine. Residues Ile610–Asp805 are a coiled coil. Residues Val701–Asp805 are interaction with CH-TOG.

Belongs to the TACC family. In terms of assembly, interacts with KIAA0097/CH-TOG and with the oncogenic transcription factor YEATS4. Interacts with AURKA, AURKB and AURKC. Interacts with LSM7, TDRD7 and SNRPG. Interacts with GCN5L2 and PCAF. Interacts with the thyroid hormone receptors THRB and THRA, predominantly with isoform alpha-2. The interaction with THRA isoform alpha-1 and THRB is decreased in the presence of thyroid hormone T3. Also interacts with other nuclear receptors, including ESR1, NR3C1, PPARG, RARA and RXRA, preferentially in the absence of their hormonal ligands. Post-translationally, isoform 1 is heavily phosphorylated; isoform 6 is not. As to expression, isoform 1, isoform 3 and isoform 5 are ubiquitous. Isoform 2 is strongly expressed in the brain, weakly detectable in lung and colon, and overexpressed in gastric cancer. Isoform 4 is not detected in normal tissues, but strong expression was found in gastric cancer tissues. Down-regulated in a subset of cases of breast cancer.

The protein resides in the cytoplasm. It localises to the nucleus. The protein localises to the cytoskeleton. Its subcellular location is the microtubule organizing center. It is found in the centrosome. The protein resides in the midbody. It localises to the membrane. In terms of biological role, involved in transcription regulation induced by nuclear receptors, including in T3 thyroid hormone and all-trans retinoic acid pathways. Might promote the nuclear localization of the receptors. Likely involved in the processes that promote cell division prior to the formation of differentiated tissues. This Homo sapiens (Human) protein is Transforming acidic coiled-coil-containing protein 1 (TACC1).